The primary structure comprises 368 residues: Solute carrier family 35 member G1 (368 aa).

The next 10 membrane-spanning stretches (helical) occupy residues 72 to 92 (GLGLFYTVLSAFLFSVASLFV), 100 to 120 (AVEISAFRCVVQMLVIIPCLI), 134 to 154 (LFLFLRGVFGSSAMILMYYAF), 161 to 181 (DATVIAFSCPVFTSIFAWIFL), 190 to 210 (AFFTLFAIAGVILIVRPPFIF), 225 to 245 (IKGTFAAIGHAVLAAITLVIL), 256 to 276 (LSIWYYVILGLPEAIIILFVI), 289 to 309 (LFLILIGLLGLGGQIFITKAV), 316 to 336 (LVAIMKTMDIVFAFIFQIAFF), and 340 to 360 (PTWWTVGGALCVVVSTTGATI). EamA domains lie at 83-205 (FLFS…LIVR) and 236-360 (VLAA…GATI).

Belongs to the TMEM20 family. Interacts with STIM1; stimulated by depletion of intracellular calcium. Interacts with ORAI1. Interacts with the plasma membrane calcium-transporting ATPases ATP2B1 and ATP2B4. Interacts with ATP1A1, ATP2A2, KPNB1 and XPO1.

The protein localises to the cell membrane. It is found in the endoplasmic reticulum membrane. Functionally, may play a role in intracellular calcium sensing and homeostasis. May act as a negative regulator of plasma membrane calcium-transporting ATPases preventing calcium efflux from the cell. This is Solute carrier family 35 member G1 (Slc35g1) from Mus musculus (Mouse).